The following is a 451-amino-acid chain: Phosphoglucosamine mutase (451 aa).

The Phosphoserine intermediate role is filled by Ser104. 4 residues coordinate Mg(2+): Ser104, Asp249, Asp251, and Asp253. Ser104 bears the Phosphoserine mark.

Belongs to the phosphohexose mutase family. The cofactor is Mg(2+). Post-translationally, activated by phosphorylation.

The enzyme catalyses alpha-D-glucosamine 1-phosphate = D-glucosamine 6-phosphate. Catalyzes the conversion of glucosamine-6-phosphate to glucosamine-1-phosphate. In Psychrobacter sp. (strain PRwf-1), this protein is Phosphoglucosamine mutase.